The following is a 63-amino-acid chain: Hypoxia-inducible lipid droplet-associated protein (63 aa).

The required for targeting to lipid droplets stretch occupies residues 1–37 (MKHVLNLYLLGVVLTLLSIFVRVMESLEGLLESPSPG). The helical transmembrane segment at 7 to 23 (LYLLGVVLTLLSIFVRV) threads the bilayer. The tract at residues 31–63 (LESPSPGTSWTTRSQLANTEPTKGLPDHPSRSM) is disordered. The segment covering 35-51 (SPGTSWTTRSQLANTEP) has biased composition (polar residues). A Phosphoserine modification is found at S44.

Highly expressed in renal cell carcinoma cells but barely detectable in adjacent normal kidney tissue. Detected in some cervical and endometrial cancers. Expression also detected in fetal kidney with little or no expression observed in normal adult heart, liver, lung, pancreas, prostate or spinal cord (at protein level).

It is found in the lipid droplet. It localises to the secreted. The protein resides in the membrane. Increases intracellular lipid accumulation. Stimulates expression of cytokines including IL6, MIF and VEGFA. Enhances cell growth and proliferation. The chain is Hypoxia-inducible lipid droplet-associated protein (HILPDA) from Homo sapiens (Human).